The sequence spans 136 residues: Large ribosomal subunit protein bL17 (136 aa).

Belongs to the bacterial ribosomal protein bL17 family. In terms of assembly, part of the 50S ribosomal subunit. Contacts protein L32.

This chain is Large ribosomal subunit protein bL17, found in Rickettsia prowazekii (strain Madrid E).